Reading from the N-terminus, the 232-residue chain is ATP-dependent dethiobiotin synthetase BioD (232 aa).

16 to 21 (GVGKTV) contacts ATP. Residue threonine 20 participates in Mg(2+) binding. The active site involves lysine 41. Residue threonine 45 participates in substrate binding. Residues aspartate 52, 111 to 114 (EGIG), 171 to 172 (NQ), 200 to 202 (PLS), and glutamate 207 contribute to the ATP site. Residues aspartate 52 and glutamate 111 each coordinate Mg(2+).

It belongs to the dethiobiotin synthetase family. In terms of assembly, homodimer. Mg(2+) is required as a cofactor.

Its subcellular location is the cytoplasm. It carries out the reaction (7R,8S)-7,8-diammoniononanoate + CO2 + ATP = (4R,5S)-dethiobiotin + ADP + phosphate + 3 H(+). The catalysed reaction is (7R,8S)-8-amino-7-(carboxyamino)nonanoate + ATP = (4R,5S)-dethiobiotin + ADP + phosphate + H(+). It participates in cofactor biosynthesis; biotin biosynthesis; biotin from 7,8-diaminononanoate: step 1/2. Functionally, catalyzes a mechanistically unusual reaction, the ATP-dependent insertion of CO2 between the N7 and N8 nitrogen atoms of 7,8-diaminopelargonic acid (DAPA, also called 7,8-diammoniononanoate) to form a ureido ring. This archaea does not encode bioA (which catalyzes the formation of the precursor for this reaction in the cannonical pathway), instead it encodes bioU, which replaces bioA and also performs the first half of the cannonical BioD reaction. Thus in this archaea BioD has a different substrate. The protein is ATP-dependent dethiobiotin synthetase BioD of Haloferax mediterranei (strain ATCC 33500 / DSM 1411 / JCM 8866 / NBRC 14739 / NCIMB 2177 / R-4) (Halobacterium mediterranei).